Consider the following 186-residue polypeptide: Large ribosomal subunit protein uL10 (186 aa).

It belongs to the universal ribosomal protein uL10 family. In terms of assembly, part of the ribosomal stalk of the 50S ribosomal subunit. The N-terminus interacts with L11 and the large rRNA to form the base of the stalk. The C-terminus forms an elongated spine to which L12 dimers bind in a sequential fashion forming a multimeric L10(L12)X complex.

Its function is as follows. Forms part of the ribosomal stalk, playing a central role in the interaction of the ribosome with GTP-bound translation factors. This is Large ribosomal subunit protein uL10 from Roseiflexus sp. (strain RS-1).